We begin with the raw amino-acid sequence, 267 residues long: Ribosomal RNA small subunit methyltransferase A (267 aa).

The S-adenosyl-L-methionine site is built by Asn12, Ile14, Gly39, Glu60, Asp84, and Asn110.

It belongs to the class I-like SAM-binding methyltransferase superfamily. rRNA adenine N(6)-methyltransferase family. RsmA subfamily.

The protein localises to the cytoplasm. It catalyses the reaction adenosine(1518)/adenosine(1519) in 16S rRNA + 4 S-adenosyl-L-methionine = N(6)-dimethyladenosine(1518)/N(6)-dimethyladenosine(1519) in 16S rRNA + 4 S-adenosyl-L-homocysteine + 4 H(+). Its function is as follows. Specifically dimethylates two adjacent adenosines (A1518 and A1519) in the loop of a conserved hairpin near the 3'-end of 16S rRNA in the 30S particle. May play a critical role in biogenesis of 30S subunits. This chain is Ribosomal RNA small subunit methyltransferase A, found in Mesoplasma florum (strain ATCC 33453 / NBRC 100688 / NCTC 11704 / L1) (Acholeplasma florum).